The sequence spans 906 residues: Glutamate receptor 1 (906 aa).

The N-terminal stretch at 1-18 is a signal peptide; it reads MQHIFAFFCTGFLGAVVG. At 19-536 the chain is on the extracellular side; sequence ANFPNNIQIG…GVFSFLDPLA (518 aa). N-linked (GlcNAc...) asparagine glycans are attached at residues Asn63, Asn249, Asn257, Asn363, Asn401, and Asn406. Cys75 and Cys323 are oxidised to a cystine. 3 residues coordinate L-glutamate: Pro492, Thr494, and Arg499. A helical transmembrane segment spans residues 537–557; it reads YEIWMCIVFAYIGVSVVLFLV. The Cytoplasmic segment spans residues 558-584; it reads SRFSPYEWHSEEFEEGRDQTTSDQSNE. The segment at residues 585 to 600 is an intramembrane region (helical; Pore-forming); it reads FGIFNSLWFSLGAFMQ. An intramembrane segment occupies 601–603; that stretch reads QGC. Cys603 carries S-palmitoyl cysteine lipidation. Residues 604-609 lie on the Cytoplasmic side of the membrane; sequence DISPRS. The chain crosses the membrane as a helical span at residues 610-630; the sequence is LSGRIVGGVWWFFTLIIISSY. Over 631-805 the chain is Extracellular; sequence TANLAAFLTV…DKTSALSLSN (175 aa). Phosphoserine is present on Ser645. Residues Ser668 and Thr669 each contribute to the L-glutamate site. Phosphoserine is present on Ser710. Glu719 provides a ligand contact to L-glutamate. Cysteines 732 and 787 form a disulfide. Residues 806 to 826 form a helical membrane-spanning segment; it reads VAGVFYILIGGLGLAMLVALI. Residues 827-906 lie on the Cytoplasmic side of the membrane; it reads EFCYKSRSES…SGMPLGATGL (80 aa). Cys829 carries the S-palmitoyl cysteine lipid modification. Phosphoserine occurs at positions 849 and 863. Residues 861–880 form a disordered region; the sequence is RNSGAGASSGGSGENGRVVS. The short motif at 903–906 is the PDZ-binding element; sequence ATGL.

This sequence belongs to the glutamate-gated ion channel (TC 1.A.10.1) family. GRIA1 subfamily. As to quaternary structure, homotetramer or heterotetramer of pore-forming glutamate receptor subunits; heteromeric assembly can be the result of both receptor subtype and flip or flop form and according the composition, one partner can be dominant with respect to the fast desensitizing current component, whereas the other can determine the steady-state component. Tetramers may be formed by the dimerization of dimers. Found in a complex with GRIA2, GRIA3, GRIA4, CNIH2, CNIH3, CACNG2, CACNG3, CACNG4, CACNG5, CACNG7 and CACNG8. Interacts with HIP1 and RASGRF2. Interacts with SYNDIG1 and GRIA2. Interacts with DLG1 (via C-terminus). Interacts with LRFN1. Interacts with PRKG2. Interacts with CNIH2 and CACNG2. Interacts with CACNG5; this interaction modulates the gating. Interacts (via C-terminus) with PDLIM4 (via LIM domain); this interaction as well as the interaction of PDLIM4 with alpha-actinin is required for their colocalization in early endosomes. Interacts with SNX27 (via PDZ domain); the interaction is required for recycling to the plasma membrane when endocytosed and prevent degradation in lysosomes. Interacts (via PDZ-binding motif) with SHANK3 (via PDZ domain). Interacts with CACNG3; associates GRIA1 with the adapter protein complex 4 (AP-4) to target GRIA1 to the somatodendritic compartment of neurons. Interacts with CACNG2; this interaction mediates traffick to the plasma membrane and modulation of desensitization. Interacts with CNIH2 and CNIH3; this interaction promotes expression at the plasma membrane and extensively modulates their gating properties by slowing deactivation and desensitization kinetics. Found in a complex with GRIA2, GRIA3, GRIA4, DLG4, CACNG8 and CNIH2. Palmitoylated. Depalmitoylated by CPT1C and upon L-glutamate stimulation. ZDHHC3/GODZ specifically palmitoylates Cys-603, which leads to Golgi retention and decreased cell surface expression. In contrast, Cys-829 palmitoylation does not affect cell surface expression but regulates stimulation-dependent endocytosis. Post-translationally, phosphorylated at Ser-645. Phosphorylated at Ser-710 by PKC. Phosphorylated at Ser-849 by PKC, PKA and CAMK2. Phosphorylated at Ser-863 by PKC, PKA and PRKG2. Phosphorylation of Ser-863 is reduced by induction of long-term depression and increased by induction of long-term potentiation. As to expression, widely expressed in brain.

It is found in the cell membrane. The protein resides in the endoplasmic reticulum membrane. The protein localises to the postsynaptic cell membrane. It localises to the postsynaptic density membrane. Its subcellular location is the cell projection. It is found in the dendrite. The protein resides in the dendritic spine. The protein localises to the early endosome membrane. It localises to the recycling endosome membrane. Its subcellular location is the presynapse. It is found in the synapse. The catalysed reaction is Ca(2+)(in) = Ca(2+)(out). It carries out the reaction Na(+)(in) = Na(+)(out). The enzyme catalyses Mg(2+)(in) = Mg(2+)(out). It catalyses the reaction Li(+)(in) = Li(+)(out). The catalysed reaction is K(+)(in) = K(+)(out). It carries out the reaction Sr(2+)(in) = Sr(2+)(out). Ionotropic glutamate receptor that functions as a ligand-gated cation channel, gated by L-glutamate and glutamatergic agonists such as alpha-amino-3-hydroxy-5-methyl-4-isoxazolepropionic acid (AMPA), quisqualic acid, and kainic acid. L-glutamate acts as an excitatory neurotransmitter at many synapses in the central nervous system. Binding of the excitatory neurotransmitter L-glutamate induces a conformation change, leading to the opening of the cation channel, and thereby converts the chemical signal to an electrical impulse upon entry of monovalent and divalent cations such as sodium and calcium. The receptor then desensitizes rapidly and enters in a transient inactive state, characterized by the presence of bound agonist. In the presence of CACNG2 or CACNG4 or CACNG7 or CACNG8, shows resensitization which is characterized by a delayed accumulation of current flux upon continued application of L-glutamate. Resensitization is blocked by CNIH2 through interaction with CACNG8 in the CACNG8-containing AMPA receptors complex. Calcium (Ca(2+)) permeability depends on subunits composition and, heteromeric channels containing edited GRIA2 subunit are calcium-impermeable. Also permeable to other divalents cations such as strontium(2+) and magnesium(2+) and monovalent cations such as potassium(1+) and lithium(1+). The chain is Glutamate receptor 1 from Homo sapiens (Human).